A 323-amino-acid polypeptide reads, in one-letter code: Cyclin-H (323 aa).

The residue at position 5 (S5) is a Phosphoserine; by CDK8. S132 is subject to Phosphoserine. The interval 299–323 (DDDYVPKKSKHEEEEWTDDDLVESL) is disordered. Basic and acidic residues predominate over residues 302 to 311 (YVPKKSKHEE). Residues 312–323 (EEWTDDDLVESL) show a composition bias toward acidic residues. At T315 the chain carries Phosphothreonine. S322 is modified (phosphoserine).

This sequence belongs to the cyclin family. Cyclin C subfamily. Associates primarily with CDK7 and MAT1 to form the CAK complex. CAK can further associate with the core-TFIIH to form the TFIIH basal transcription factor.

The protein resides in the nucleus. Its function is as follows. Regulates CDK7, the catalytic subunit of the CDK-activating kinase (CAK) enzymatic complex. CAK activates the cyclin-associated kinases CDK1, CDK2, CDK4 and CDK6 by threonine phosphorylation. CAK complexed to the core-TFIIH basal transcription factor activates RNA polymerase II by serine phosphorylation of the repetitive C-terminal domain (CTD) of its large subunit (POLR2A), allowing its escape from the promoter and elongation of the transcripts. Involved in cell cycle control and in RNA transcription by RNA polymerase II. Its expression and activity are constant throughout the cell cycle. This chain is Cyclin-H (CCNH), found in Macaca fascicularis (Crab-eating macaque).